A 44-amino-acid polypeptide reads, in one-letter code: Relaxin (44 aa).

Q1 carries the pyrrolidone carboxylic acid modification. 3 disulfide bridges follow: C3–C31, C15–C44, and C30–C35.

It belongs to the insulin family. In terms of assembly, heterodimer of a B chain and an A chain linked by two disulfide bonds.

The protein localises to the secreted. This is Relaxin from Carcharias taurus (Sand tiger shark).